Reading from the N-terminus, the 449-residue chain is Tubulin beta-4 chain (449 aa).

The short motif at 1-4 (MREI) is the MREI motif element. GTP is bound by residues Gln-11, Glu-69, Ser-138, Gly-142, Thr-143, Gly-144, Asn-204, and Asn-226. Glu-69 contacts Mg(2+). The segment at 421–449 (EYQQYQDATAEEEGEMYEDDEEESEQGAK) is disordered. Residues 429–449 (TAEEEGEMYEDDEEESEQGAK) show a composition bias toward acidic residues. Glu-438 carries the 5-glutamyl polyglutamate modification. Phosphoserine is present on Ser-444.

It belongs to the tubulin family. Dimer of alpha and beta chains. A typical microtubule is a hollow water-filled tube with an outer diameter of 25 nm and an inner diameter of 15 nM. Alpha-beta heterodimers associate head-to-tail to form protofilaments running lengthwise along the microtubule wall with the beta-tubulin subunit facing the microtubule plus end conferring a structural polarity. Microtubules usually have 13 protofilaments but different protofilament numbers can be found in some organisms and specialized cells. Mg(2+) serves as cofactor. In terms of processing, some glutamate residues at the C-terminus are polyglycylated, resulting in polyglycine chains on the gamma-carboxyl group. Glycylation is mainly limited to tubulin incorporated into axonemes (cilia and flagella) whereas glutamylation is prevalent in neuronal cells, centrioles, axonemes, and the mitotic spindle. Both modifications can coexist on the same protein on adjacent residues, and lowering polyglycylation levels increases polyglutamylation, and reciprocally. The precise function of polyglycylation is still unclear. Some glutamate residues at the C-terminus are polyglutamylated, resulting in polyglutamate chains on the gamma-carboxyl group. Polyglutamylation plays a key role in microtubule severing by spastin (SPAST). SPAST preferentially recognizes and acts on microtubules decorated with short polyglutamate tails: severing activity by SPAST increases as the number of glutamates per tubulin rises from one to eight, but decreases beyond this glutamylation threshold. In terms of tissue distribution, neuron specific.

Its subcellular location is the cytoplasm. The protein localises to the cytoskeleton. Functionally, tubulin is the major constituent of microtubules, a cylinder consisting of laterally associated linear protofilaments composed of alpha- and beta-tubulin heterodimers. Microtubules grow by the addition of GTP-tubulin dimers to the microtubule end, where a stabilizing cap forms. Below the cap, tubulin dimers are in GDP-bound state, owing to GTPase activity of alpha-tubulin. This chain is Tubulin beta-4 chain, found in Gallus gallus (Chicken).